The primary structure comprises 193 residues: Ion-translocating oxidoreductase complex subunit A (193 aa).

The next 6 helical transmembrane spans lie at 5 to 25 (LLLF…FLGL), 39 to 59 (MGMG…AWLI), 63 to 83 (ILIP…VIAV), 102 to 122 (LLGI…VALL), 134 to 154 (ALYG…FAAI), and 171 to 191 (AIAL…NGLV).

The protein belongs to the NqrDE/RnfAE family. As to quaternary structure, the complex is composed of six subunits: RsxA, RsxB, RsxC, RsxD, RsxE and RsxG.

It is found in the cell inner membrane. In terms of biological role, part of a membrane-bound complex that couples electron transfer with translocation of ions across the membrane. Required to maintain the reduced state of SoxR. The polypeptide is Ion-translocating oxidoreductase complex subunit A (Shigella sonnei (strain Ss046)).